A 377-amino-acid polypeptide reads, in one-letter code: Nitric oxide reductase FlRd-NAD(+) reductase (377 aa).

This sequence belongs to the FAD-dependent oxidoreductase family. It depends on FAD as a cofactor.

It localises to the cytoplasm. The enzyme catalyses 2 reduced [nitric oxide reductase rubredoxin domain] + NAD(+) + H(+) = 2 oxidized [nitric oxide reductase rubredoxin domain] + NADH. The protein operates within nitrogen metabolism; nitric oxide reduction. Its function is as follows. One of at least two accessory proteins for anaerobic nitric oxide (NO) reductase. Reduces the rubredoxin moiety of NO reductase. The sequence is that of Nitric oxide reductase FlRd-NAD(+) reductase from Escherichia coli O81 (strain ED1a).